The sequence spans 102 residues: Small ribosomal subunit protein uS10 (102 aa).

Belongs to the universal ribosomal protein uS10 family. In terms of assembly, part of the 30S ribosomal subunit.

In terms of biological role, involved in the binding of tRNA to the ribosomes. The protein is Small ribosomal subunit protein uS10 of Staphylococcus aureus (strain Mu3 / ATCC 700698).